Consider the following 338-residue polypeptide: Oligopeptide transport ATP-binding protein OppD (338 aa).

Positions 7 to 257 (LEAKQVSVAF…PKHPYTRSLL (251 aa)) constitute an ABC transporter domain. 43-50 (GESGSGKS) is an ATP binding site.

The protein belongs to the ABC transporter superfamily. As to quaternary structure, the complex is composed of two ATP-binding proteins (OppD and OppF), two transmembrane proteins (OppB and OppC) and a solute-binding protein (OppA).

Its subcellular location is the cell membrane. It carries out the reaction a [peptide](out) + ATP + H2O = a [peptide](in) + ADP + phosphate + H(+). Part of the ABC transporter complex OppABCDF involved in the uptake of oligopeptides. Probably responsible for energy coupling to the transport system. Essential for uptake of peptides larger than three amino acids and for growth in milk. In Lactococcus lactis subsp. cremoris (strain SK11), this protein is Oligopeptide transport ATP-binding protein OppD.